Here is a 502-residue protein sequence, read N- to C-terminus: Maturase K (502 aa).

It belongs to the intron maturase 2 family. MatK subfamily.

It localises to the plastid. Its subcellular location is the chloroplast. Functionally, usually encoded in the trnK tRNA gene intron. Probably assists in splicing its own and other chloroplast group II introns. The sequence is that of Maturase K from Vitis vinifera (Grape).